The chain runs to 354 residues: Guanine nucleotide-binding protein alpha-3 subunit (354 aa).

Residue Gly-2 is the site of N-myristoyl glycine attachment. Residue Cys-4 is the site of S-palmitoyl cysteine attachment. Residues 33-354 enclose the G-alpha domain; that stretch reads KECKILLLGS…TNALKDSGIL (322 aa). The interval 36 to 49 is G1 motif; that stretch reads KILLLGSGESGKST. Residues 41–48, 177–183, 202–206, 271–274, and Ala-326 contribute to the GTP site; these read GSGESGKS, LRARSKT, DVGGQ, and NKID. Mg(2+) contacts are provided by Ser-48 and Thr-183. The segment at 175-183 is G2 motif; it reads DVLRARSKT. A G3 motif region spans residues 198–207; sequence IHLFDVGGQR. The tract at residues 267–274 is G4 motif; the sequence is ILFLNKID. The interval 324 to 329 is G5 motif; it reads TQATDT.

This sequence belongs to the G-alpha family. G proteins are composed of 3 units; alpha, beta and gamma. The alpha chain contains the guanine nucleotide binding site.

Functionally, guanine nucleotide-binding proteins (G proteins) are involved as modulators or transducers in various transmembrane signaling systems. GPA3 plays an active role in transmission of the pheromone signal. The polypeptide is Guanine nucleotide-binding protein alpha-3 subunit (GPA3) (Mycosarcoma maydis (Corn smut fungus)).